The following is a 109-amino-acid chain: Ribonuclease P protein component (109 aa).

Belongs to the RnpA family. In terms of assembly, consists of a catalytic RNA component (M1 or rnpB) and a protein subunit.

The catalysed reaction is Endonucleolytic cleavage of RNA, removing 5'-extranucleotides from tRNA precursor.. Functionally, RNaseP catalyzes the removal of the 5'-leader sequence from pre-tRNA to produce the mature 5'-terminus. It can also cleave other RNA substrates such as 4.5S RNA. The protein component plays an auxiliary but essential role in vivo by binding to the 5'-leader sequence and broadening the substrate specificity of the ribozyme. In Mycoplasma capricolum subsp. capricolum (strain California kid / ATCC 27343 / NCTC 10154), this protein is Ribonuclease P protein component.